A 254-amino-acid chain; its full sequence is Triosephosphate isomerase (254 aa).

Asn-9–Lys-11 is a substrate binding site. His-96 serves as the catalytic Electrophile. Glu-169 serves as the catalytic Proton acceptor. Substrate-binding positions include Gly-175, Ser-215, and Gly-236–Gly-237.

This sequence belongs to the triosephosphate isomerase family. In terms of assembly, homodimer.

It is found in the cytoplasm. It carries out the reaction D-glyceraldehyde 3-phosphate = dihydroxyacetone phosphate. The protein operates within carbohydrate biosynthesis; gluconeogenesis. Its pathway is carbohydrate degradation; glycolysis; D-glyceraldehyde 3-phosphate from glycerone phosphate: step 1/1. Its function is as follows. Involved in the gluconeogenesis. Catalyzes stereospecifically the conversion of dihydroxyacetone phosphate (DHAP) to D-glyceraldehyde-3-phosphate (G3P). The protein is Triosephosphate isomerase of Borrelia duttonii (strain Ly).